Consider the following 455-residue polypeptide: Bleomycin hydrolase (455 aa).

Catalysis depends on residues Cys73, His372, and Asn396.

This sequence belongs to the peptidase C1 family. As to quaternary structure, homooctamer.

It localises to the cytoplasm. The catalysed reaction is Inactivates bleomycin B2 (a cytotoxic glycometallopeptide) by hydrolysis of a carboxyamide bond of beta-aminoalanine, but also shows general aminopeptidase activity. The specificity varies somewhat with source, but amino acid arylamides of Met, Leu and Ala are preferred.. Functionally, the normal physiological role of BLM hydrolase is unknown, but it catalyzes the inactivation of the antitumor drug BLM (a glycopeptide) by hydrolyzing the carboxamide bond of its B-aminoalaninamide moiety thus protecting normal and malignant cells from BLM toxicity. The protein is Bleomycin hydrolase (BLMH) of Gallus gallus (Chicken).